Here is a 299-residue protein sequence, read N- to C-terminus: 4-hydroxybenzoate octaprenyltransferase (299 aa).

A run of 8 helical transmembrane segments spans residues V33–V53, W56–I76, L107–L127, L151–I171, W180–V200, I213–L233, H247–A267, and A278–T298.

It belongs to the UbiA prenyltransferase family. Mg(2+) serves as cofactor.

It is found in the cell inner membrane. It carries out the reaction all-trans-octaprenyl diphosphate + 4-hydroxybenzoate = 4-hydroxy-3-(all-trans-octaprenyl)benzoate + diphosphate. Its pathway is cofactor biosynthesis; ubiquinone biosynthesis. Catalyzes the prenylation of para-hydroxybenzoate (PHB) with an all-trans polyprenyl group. Mediates the second step in the final reaction sequence of ubiquinone-8 (UQ-8) biosynthesis, which is the condensation of the polyisoprenoid side chain with PHB, generating the first membrane-bound Q intermediate 3-octaprenyl-4-hydroxybenzoate. The polypeptide is 4-hydroxybenzoate octaprenyltransferase (Xylella fastidiosa (strain M12)).